The following is a 302-amino-acid chain: Probable 2-(5''-triphosphoribosyl)-3'-dephosphocoenzyme-A synthase 1 (302 aa).

It belongs to the CitG/MdcB family.

The enzyme catalyses 3'-dephospho-CoA + ATP = 2'-(5''-triphospho-alpha-D-ribosyl)-3'-dephospho-CoA + adenine. The protein is Probable 2-(5''-triphosphoribosyl)-3'-dephosphocoenzyme-A synthase 1 of Salmonella typhimurium (strain LT2 / SGSC1412 / ATCC 700720).